Here is a 228-residue protein sequence, read N- to C-terminus: Ribonuclease HII (228 aa).

An RNase H type-2 domain is found at 1–210 (MKIAGIDEAG…LKKIAEKVES (210 aa)). 3 residues coordinate a divalent metal cation: Asp7, Glu8, and Asp105.

Belongs to the RNase HII family. Monomer. The cofactor is Mn(2+). Mg(2+) serves as cofactor.

The protein resides in the cytoplasm. It carries out the reaction Endonucleolytic cleavage to 5'-phosphomonoester.. In terms of biological role, endonuclease that specifically degrades the RNA of RNA-DNA hybrids. This chain is Ribonuclease HII (rnhB), found in Thermococcus kodakarensis (strain ATCC BAA-918 / JCM 12380 / KOD1) (Pyrococcus kodakaraensis (strain KOD1)).